The chain runs to 107 residues: Proteinase inhibitor I-B (107 aa).

A signal peptide spans 1 to 22 (MVKFAHVVAFLLLASLFQPLTA). Positions 23–39 (RDLEINVLQLDVSQSGC) are excised as a propeptide.

The protein belongs to the protease inhibitor I13 (potato type I serine protease inhibitor) family.

It is found in the secreted. This is Proteinase inhibitor I-B (TIMPA) from Nicotiana tabacum (Common tobacco).